Here is a 468-residue protein sequence, read N- to C-terminus: ATP synthase subunit beta (468 aa).

155–162 (GGAGVGKT) is a binding site for ATP.

The protein belongs to the ATPase alpha/beta chains family. As to quaternary structure, F-type ATPases have 2 components, CF(1) - the catalytic core - and CF(0) - the membrane proton channel. CF(1) has five subunits: alpha(3), beta(3), gamma(1), delta(1), epsilon(1). CF(0) has three main subunits: a(1), b(2) and c(9-12). The alpha and beta chains form an alternating ring which encloses part of the gamma chain. CF(1) is attached to CF(0) by a central stalk formed by the gamma and epsilon chains, while a peripheral stalk is formed by the delta and b chains.

It localises to the cell membrane. It catalyses the reaction ATP + H2O + 4 H(+)(in) = ADP + phosphate + 5 H(+)(out). Functionally, produces ATP from ADP in the presence of a proton gradient across the membrane. The catalytic sites are hosted primarily by the beta subunits. The polypeptide is ATP synthase subunit beta (Streptococcus agalactiae serotype Ia (strain ATCC 27591 / A909 / CDC SS700)).